The primary structure comprises 429 residues: Threonine synthase (429 aa).

K108 carries the N6-(pyridoxal phosphate)lysine modification.

The protein belongs to the threonine synthase family. Requires pyridoxal 5'-phosphate as cofactor.

It carries out the reaction O-phospho-L-homoserine + H2O = L-threonine + phosphate. It functions in the pathway amino-acid biosynthesis; L-threonine biosynthesis; L-threonine from L-aspartate: step 5/5. In terms of biological role, catalyzes the gamma-elimination of phosphate from L-phosphohomoserine and the beta-addition of water to produce L-threonine. The protein is Threonine synthase (thrC) of Buchnera aphidicola subsp. Acyrthosiphon pisum (strain APS) (Acyrthosiphon pisum symbiotic bacterium).